The following is a 461-amino-acid chain: Photosynthetic NDH subunit of subcomplex B 1, chloroplastic (461 aa).

A chloroplast-targeting transit peptide spans 1–44; the sequence is MASSLPLLPKPISPFFKTPPFSTSKPLVFLNFQTRLTSRSSDVS. The interval 66 to 90 is disordered; it reads NEYGSLFADGKQDEDPRPPDNPDNP. The segment covering 75-85 has biased composition (basic and acidic residues); that stretch reads GKQDEDPRPPD.

As to quaternary structure, part of the chloroplast NDH complex, composed of a mixture of chloroplast and nucleus encoded subunits. Component of the NDH subcomplex B, at least composed of PnsB1, PnsB2, PnsB3, PnsB4 and PnsB5.

It is found in the plastid. The protein resides in the chloroplast thylakoid membrane. Functionally, NDH shuttles electrons from NAD(P)H:plastoquinone, via FMN and iron-sulfur (Fe-S) centers, to quinones in the photosynthetic chain and possibly in a chloroplast respiratory chain. The immediate electron acceptor for the enzyme in this species is believed to be plastoquinone. Couples the redox reaction to proton translocation, and thus conserves the redox energy in a proton gradient. In Arabidopsis thaliana (Mouse-ear cress), this protein is Photosynthetic NDH subunit of subcomplex B 1, chloroplastic.